Here is a 375-residue protein sequence, read N- to C-terminus: Enoyl-[acyl-carrier-protein] reductase, mitochondrial (375 aa).

Residues 1–37 (MAALMESVVGRALKFSSTANFRSIRRGETPTLCIKSF) constitute a mitochondrion transit peptide. Tyrosine 96 acts as the Proton donor in catalysis. Residues asparagine 169, 195–198 (TSIV), 218–220 (RDR), 287–290 (YGGM), 312–314 (FWL), and lysine 370 contribute to the NADP(+) site.

The protein belongs to the zinc-containing alcohol dehydrogenase family. Quinone oxidoreductase subfamily. In terms of assembly, homodimer.

It is found in the mitochondrion. It catalyses the reaction a 2,3-saturated acyl-[ACP] + NADP(+) = a (2E)-enoyl-[ACP] + NADPH + H(+). Its function is as follows. Catalyzes the NADPH-dependent reduction of trans-2-enoyl thioesters in mitochondrial fatty acid synthesis (fatty acid synthesis type II). Fatty acid chain elongation in mitochondria uses acyl carrier protein (ACP) as an acyl group carrier, but the enzyme accepts both ACP and CoA thioesters as substrates in vitro. This chain is Enoyl-[acyl-carrier-protein] reductase, mitochondrial, found in Arabidopsis thaliana (Mouse-ear cress).